The chain runs to 116 residues: MSFCSFFGGEVFQNHFEPGVYVCAKCGYELFSSRSKYAHSSPWPAFTETIHADSVAKRPEHNRAEALKVSCGKCGNGLGHEFLNDGPKPGQSRFUIFSSSLKFVPKGKETSASQGH.

A MsrB domain is found at 1-106 (MSFCSFFGGE…FSSSLKFVPK (106 aa)). Cys-23, Cys-26, Cys-71, and Cys-74 together coordinate Zn(2+). Sec-95 serves as the catalytic Nucleophile. Residue Sec-95 is a non-standard amino acid, selenocysteine.

It belongs to the MsrB Met sulfoxide reductase family. The cofactor is Zn(2+). Truncated MSRB1/SEPX1 proteins produced by failed UGA/Sec decoding are ubiquitinated by the CRL2(FEM1C) E3 ubiquitin-protein ligase complex.

It is found in the cytoplasm. Its subcellular location is the nucleus. It localises to the cytoskeleton. The enzyme catalyses L-methionyl-[protein] + [thioredoxin]-disulfide + H2O = L-methionyl-(R)-S-oxide-[protein] + [thioredoxin]-dithiol. It carries out the reaction [thioredoxin]-disulfide + L-methionine + H2O = L-methionine (R)-S-oxide + [thioredoxin]-dithiol. In terms of biological role, methionine-sulfoxide reductase that specifically reduces methionine (R)-sulfoxide back to methionine. While in many cases, methionine oxidation is the result of random oxidation following oxidative stress, methionine oxidation is also a post-translational modification that takes place on specific residue. Acts as a regulator of actin assembly by reducing methionine (R)-sulfoxide mediated by MICALs (MICAL1, MICAL2 or MICAL3) on actin, thereby promoting filament repolymerization. Plays a role in innate immunity by reducing oxidized actin, leading to actin repolymerization in macrophages. The chain is Methionine-R-sulfoxide reductase B1 (MSRB1) from Pongo abelii (Sumatran orangutan).